The chain runs to 541 residues: Nif-specific regulatory protein (541 aa).

Residues 23 to 158 enclose the GAF domain; it reads RLETTLNNFV…MAANLAGRAI (136 aa). Residues 170–191 form a disordered region; that stretch reads TFAEEQQEQQNSRDEQSQSSAR. The 229-residue stretch at 200–428 folds into the Sigma-54 factor interaction domain; that stretch reads IIGESTALMT…LENCVRRTAT (229 aa). ATP is bound by residues 228-235 and 291-300; these read GETGTGKE and ANGGTLLLDE. Residues 429–498 form an inter-domain linker region; sequence LARSKTITSS…SAGVASNLIE (70 aa). Residues Cys442 and Cys447 each coordinate a divalent metal cation. The tract at residues 499-541 is C-terminal DNA-binding domain; sequence RDRLISALEEAGWNQAKAARILEKTPRQVGYALRRHGVDVRKL. The segment at residues 513-532 is a DNA-binding region (H-T-H motif); that stretch reads QAKAARILEKTPRQVGYALR.

In terms of assembly, interacts with sigma-54.

Its function is as follows. Required for activation of most nif operons, which are directly involved in nitrogen fixation. In Rhizobium meliloti (strain 1021) (Ensifer meliloti), this protein is Nif-specific regulatory protein (nifA).